The primary structure comprises 72 residues: Translation initiation factor IF-1 (72 aa).

Residues 1-72 form the S1-like domain; it reads MARDDVIEVD…DRGRITFRYK (72 aa).

It belongs to the IF-1 family. Component of the 30S ribosomal translation pre-initiation complex which assembles on the 30S ribosome in the order IF-2 and IF-3, IF-1 and N-formylmethionyl-tRNA(fMet); mRNA recruitment can occur at any time during PIC assembly.

It is found in the cytoplasm. In terms of biological role, one of the essential components for the initiation of protein synthesis. Stabilizes the binding of IF-2 and IF-3 on the 30S subunit to which N-formylmethionyl-tRNA(fMet) subsequently binds. Helps modulate mRNA selection, yielding the 30S pre-initiation complex (PIC). Upon addition of the 50S ribosomal subunit IF-1, IF-2 and IF-3 are released leaving the mature 70S translation initiation complex. The chain is Translation initiation factor IF-1 from Helicobacter acinonychis (strain Sheeba).